Here is a 189-residue protein sequence, read N- to C-terminus: Large ribosomal subunit protein bL9 (189 aa).

This sequence belongs to the bacterial ribosomal protein bL9 family.

Its function is as follows. Binds to the 23S rRNA. This Cereibacter sphaeroides (strain KD131 / KCTC 12085) (Rhodobacter sphaeroides) protein is Large ribosomal subunit protein bL9.